The following is a 453-amino-acid chain: Pre-mRNA-splicing factor prp46 (453 aa).

Residues Glu62–Gly71 show a composition bias toward low complexity. The interval Glu62–Asp129 is disordered. WD repeat units lie at residues Gly142 to Thr181, Gly184 to His223, Gly226 to Val265, Gly268 to Thr309, His311 to Glu350, Gly351 to Ser389, and Asp400 to Ser439. Residues Asp432–Tyr453 are disordered.

The protein belongs to the WD repeat PRL1/PRL2 family. In terms of assembly, associated with the spliceosome.

It localises to the cytoplasm. The protein localises to the nucleus. Involved in pre-mRNA splicing and required for cell cycle progression at G2/M. This chain is Pre-mRNA-splicing factor prp46 (prp46), found in Aspergillus fumigatus (strain ATCC MYA-4609 / CBS 101355 / FGSC A1100 / Af293) (Neosartorya fumigata).